The sequence spans 314 residues: tRNA pseudouridine synthase B (314 aa).

Position 43 (histidine 43) interacts with substrate. Residue aspartate 48 is the Nucleophile of the active site. Substrate contacts are provided by tyrosine 76, tyrosine 179, and leucine 200.

This sequence belongs to the pseudouridine synthase TruB family. Type 1 subfamily.

The catalysed reaction is uridine(55) in tRNA = pseudouridine(55) in tRNA. Its function is as follows. Responsible for synthesis of pseudouridine from uracil-55 in the psi GC loop of transfer RNAs. This Enterobacter sp. (strain 638) protein is tRNA pseudouridine synthase B.